A 161-amino-acid polypeptide reads, in one-letter code: Nucleoside diphosphate kinase (161 aa).

Residues lysine 12, phenylalanine 60, arginine 88, threonine 94, and arginine 105 each contribute to the ATP site. The Pros-phosphohistidine intermediate role is filled by histidine 121.

It belongs to the NDK family. Mg(2+) is required as a cofactor.

It is found in the cytoplasm. It catalyses the reaction a 2'-deoxyribonucleoside 5'-diphosphate + ATP = a 2'-deoxyribonucleoside 5'-triphosphate + ADP. It carries out the reaction a ribonucleoside 5'-diphosphate + ATP = a ribonucleoside 5'-triphosphate + ADP. Major role in the synthesis of nucleoside triphosphates other than ATP. The ATP gamma phosphate is transferred to the NDP beta phosphate via a ping-pong mechanism, using a phosphorylated active-site intermediate. This is Nucleoside diphosphate kinase from Pyrococcus furiosus (strain ATCC 43587 / DSM 3638 / JCM 8422 / Vc1).